Consider the following 248-residue polypeptide: DNA repair protein RecO (248 aa).

The protein belongs to the RecO family.

In terms of biological role, involved in DNA repair and RecF pathway recombination. In Streptomyces griseus subsp. griseus (strain JCM 4626 / CBS 651.72 / NBRC 13350 / KCC S-0626 / ISP 5235), this protein is DNA repair protein RecO.